A 138-amino-acid polypeptide reads, in one-letter code: Small ribosomal subunit protein uS11c (138 aa).

A disordered region spans residues 1 to 22; the sequence is MAKAIPKISSRRNGRISSRKGA. Positions 9–22 are enriched in basic residues; sequence SSRRNGRISSRKGA.

The protein belongs to the universal ribosomal protein uS11 family. As to quaternary structure, part of the 30S ribosomal subunit.

It localises to the plastid. Its subcellular location is the chloroplast. The polypeptide is Small ribosomal subunit protein uS11c (Solanum bulbocastanum (Wild potato)).